Consider the following 451-residue polypeptide: 3-phosphoshikimate 1-carboxyvinyltransferase (451 aa).

Lys-30, Ser-31, and Arg-35 together coordinate 3-phosphoshikimate. Lys-30 is a binding site for phosphoenolpyruvate. The phosphoenolpyruvate site is built by Gly-101 and Arg-130. The 3-phosphoshikimate site is built by Ser-176, Ser-177, Gln-178, Asp-321, and Lys-348. Residue Gln-178 coordinates phosphoenolpyruvate. Residue Asp-321 is the Proton acceptor of the active site. Positions 352 and 422 each coordinate phosphoenolpyruvate.

It belongs to the EPSP synthase family. Monomer.

The protein resides in the cytoplasm. The enzyme catalyses 3-phosphoshikimate + phosphoenolpyruvate = 5-O-(1-carboxyvinyl)-3-phosphoshikimate + phosphate. The protein operates within metabolic intermediate biosynthesis; chorismate biosynthesis; chorismate from D-erythrose 4-phosphate and phosphoenolpyruvate: step 6/7. Functionally, catalyzes the transfer of the enolpyruvyl moiety of phosphoenolpyruvate (PEP) to the 5-hydroxyl of shikimate-3-phosphate (S3P) to produce enolpyruvyl shikimate-3-phosphate and inorganic phosphate. This is 3-phosphoshikimate 1-carboxyvinyltransferase from Burkholderia pseudomallei (strain K96243).